The following is a 100-amino-acid chain: NAD(P)H-quinone oxidoreductase subunit 4L, chloroplastic (100 aa).

3 consecutive transmembrane segments (helical) span residues 1–21, 31–51, and 63–83; these read MLEH…YGLV, MCLE…SNFF, and IFVI…VLAI.

This sequence belongs to the complex I subunit 4L family. NDH is composed of at least 16 different subunits, 5 of which are encoded in the nucleus.

It localises to the plastid. The protein resides in the chloroplast thylakoid membrane. It catalyses the reaction a plastoquinone + NADH + (n+1) H(+)(in) = a plastoquinol + NAD(+) + n H(+)(out). The catalysed reaction is a plastoquinone + NADPH + (n+1) H(+)(in) = a plastoquinol + NADP(+) + n H(+)(out). NDH shuttles electrons from NAD(P)H:plastoquinone, via FMN and iron-sulfur (Fe-S) centers, to quinones in the photosynthetic chain and possibly in a chloroplast respiratory chain. The immediate electron acceptor for the enzyme in this species is believed to be plastoquinone. Couples the redox reaction to proton translocation, and thus conserves the redox energy in a proton gradient. The polypeptide is NAD(P)H-quinone oxidoreductase subunit 4L, chloroplastic (Cryptomeria japonica (Japanese cedar)).